Consider the following 106-residue polypeptide: Phosphoribosyl-ATP pyrophosphatase (106 aa).

Belongs to the PRA-PH family.

The protein localises to the cytoplasm. The catalysed reaction is 1-(5-phospho-beta-D-ribosyl)-ATP + H2O = 1-(5-phospho-beta-D-ribosyl)-5'-AMP + diphosphate + H(+). It functions in the pathway amino-acid biosynthesis; L-histidine biosynthesis; L-histidine from 5-phospho-alpha-D-ribose 1-diphosphate: step 2/9. This is Phosphoribosyl-ATP pyrophosphatase from Methylobacillus flagellatus (strain ATCC 51484 / DSM 6875 / VKM B-1610 / KT).